Here is a 129-residue protein sequence, read N- to C-terminus: uncharacterized protein (129 aa).

This is an uncharacterized protein from Sinorhizobium fredii (strain NBRC 101917 / NGR234).